An 80-amino-acid chain; its full sequence is Photosystem II extrinsic protein V (80 aa).

Methionine 47 contributes to the heme binding site.

It belongs to the cytochrome c family. PsbV subfamily. As to quaternary structure, PSII is composed of 1 copy each of membrane proteins PsbA, PsbB, PsbC, PsbD, PsbE, PsbF, PsbH, PsbI, PsbJ, PsbK, PsbL, PsbM, PsbT, PsbY, PsbZ, Psb30/Ycf12, at least 3 peripheral proteins of the oxygen-evolving complex and a large number of cofactors. It forms dimeric complexes. The cofactor is heme.

It localises to the plastid. The protein localises to the chloroplast thylakoid membrane. In terms of biological role, one of the extrinsic, lumenal subunits of photosystem II (PSII). PSII is a light-driven water plastoquinone oxidoreductase, using light energy to abstract electrons from H(2)O, generating a proton gradient subsequently used for ATP formation. The extrinsic proteins stabilize the structure of photosystem II oxygen-evolving complex (OEC), the ion environment of oxygen evolution and protect the OEC against heat-induced inactivation. This Thalassiosira weissflogii (Marine diatom) protein is Photosystem II extrinsic protein V.